Reading from the N-terminus, the 393-residue chain is MKVITAFLSVFVLCSAEDDDKLTVASNDLGMRMLPLLPSSPGENIFFSPYSLSIAMGMAYAGAGGETRQELHENLGYSRAGLPEAEVLDAYARQTQRHLSDPSNTTVDVANTAAIHLGLPLLDEYETILRNSFNADLQKVDFVENGQGAVDVINSWVKDKTHNKIESLFSEPLDPLTRFVLLNAMYFKGTWKTEFQKRRTEQRSFFNGGVTQAQVDTMIGKIRIRHNSFNDVGVDVAELPYRGGDYSMVILLPQEKTGVEALKTNLTAGLFKTLLDRLVQRQVTVFLPKFKFESKYSLKEILQNMGIRRIFGGGADLSGISGDTSLEVYDVVQKAVVEVNEEGTEAAVVSAVIGGLRSGSFDGFEFRVDHPFLFFIRDTRTNAILFVGQVNHL.

Residues 1-16 (MKVITAFLSVFVLCSA) form the signal peptide. Residues Asn-104 and Asn-265 are each glycosylated (N-linked (GlcNAc...) asparagine).

This sequence belongs to the serpin family. As to quaternary structure, interacts with human KLKB1. Interacts with human ST14. Interacts with human F2 (thrombin). Saliva (at protein level). Expressed in salivary gland. Expressed in ovary during blood feeding.

The protein resides in the secreted. Functionally, serine protease inhibitor that modulates blood feeding of ticks on vertebrate species. Moderately inhibits host plasma kallikrein (KLKB1), matriptase (ST14), trypsin, plasmin (PLG), thrombin (F2) and coagulation factor VIIa (F7). Slightly inhibits host alpha-chymotrypsin, tPA/tissue-type plasminogen activator (PLAT), uPA/urokinase-type plasminogen activator (PLAU) and coagulation factor XIIa (F12). Slightly inhibits the extrinsic pathway while not affecting the intrinsic and common pathways of host blood coagulation. Decreases synthesis and secretion of IL6 by mouse bone marrow-derived macrophages. Decreases viability of mouse B- and T-cells. Decreases proliferation of mouse CD4+ T-cells in response to stimulation. Inhibits Th1 immune responses in mouse cells. Promotes differentiation of mouse regulatory T-cells. This chain is Iripin-3, found in Ixodes ricinus (Common tick).